The sequence spans 975 residues: MAEHGHNMWEEEPSKGRDSLDSDSSASTTSLVFDQISERVAAESGTTKGKRMRYGHDEADLGARLSELDDEDPLKDEASGDYDLETGPFLGGHGHNSNHDGLSAASGSAGKTQGGYRMMDRGLRRVLIIASLVFVTAWVGGLFIYISHKSYLHGSEFEHDPQATVSRGSLRKITREQVDNGFWRPVKASIAWVAGPAGEDGLLLETNASGASDKAYLTVQDVRSLQQGLDASTEAAVAAARRTLVEKSTFTFAGKTYRIGSSKASKDMSKVLLGVDVQSNWRHSSTAAYFILEVATQTVQPLIPGEVSARVQLAQWSPQSDAIAFTRDNNLYFRQVVAGSSSSAEDADSVIKQITTDGGPELFYGVPDWVYEEEVLGGASATWWSPDGRYIAFLRTNETGVPEYPVQYFLHRPSGAAPAEGEENYPEVRQIKYPKAGAHNPVVDLQFFDVGRGDSFSVAVSGEFADENRLITTVLWAGAQKVLVKETNRVSTVMRVVVVDVAARSGQAVRTVDVGAIDGGWFEISQRTRFIPADPARQRPDDGYIDTIVHNNGDHLAYFSPPENPEPIMLTAGPDWEVDDAPAAVDLERNLVYFLATIQGITQRHLYSVRLLDGGGLSPLTNTSEPGFYGASFSAGVGAGYVLLEYGGPNIPWQKVMNTPAAAAAAAAGSADVSKQMPFVHVLEDNHELAERARQYALPLLVRGTFDVKGHDEGVGAGKLNYLERRPPHFDPSKKYPVLFQQYSGPGSQEVTHEFSVDFQSYVAASLGYVVVTVDPRGTGFAGRSNRVVVRGRLGVVESHDHIAAAQHWASLPYIDGDRLAIWGWSYGGFTTLKTLEQDAGRTFRYGIAVAPVTDWRFYDSVYTERYMDTPQANAVGYDTGAVTNASALAQNVRFLIMHGIADDNVHLQNSLALLDRLDIEGVSNYDVHVFPDSDHSIYFHNGRQIVYDKLENWLINAFNGEWLKIDNAKPQGKR.

A compositionally biased stretch (basic and acidic residues) spans 1–20 (MAEHGHNMWEEEPSKGRDSL). The disordered stretch occupies residues 1-111 (MAEHGHNMWE…LSAASGSAGK (111 aa)). The Cytoplasmic segment spans residues 1 to 125 (MAEHGHNMWE…YRMMDRGLRR (125 aa)). A compositionally biased stretch (low complexity) spans 22–31 (SDSSASTTSL). Over residues 68-84 (LDDEDPLKDEASGDYDL) the composition is skewed to acidic residues. The helical; Signal-anchor for type II membrane protein transmembrane segment at 126–146 (VLIIASLVFVTAWVGGLFIYI) threads the bilayer. Residues 147-975 (SHKSYLHGSE…IDNAKPQGKR (829 aa)) lie on the Vacuolar side of the membrane. 3 N-linked (GlcNAc...) asparagine glycosylation sites follow: Asn-207, Asn-397, and Asn-622. Residue Ser-826 is the Charge relay system of the active site. The N-linked (GlcNAc...) asparagine glycan is linked to Asn-885. Active-site charge relay system residues include Asp-903 and His-936.

This sequence belongs to the peptidase S9B family.

The protein localises to the vacuole membrane. The enzyme catalyses Release of an N-terminal dipeptide, Xaa-Yaa-|-Zaa-, from a polypeptide, preferentially when Yaa is Pro, provided Zaa is neither Pro nor hydroxyproline.. In terms of biological role, type IV dipeptidyl-peptidase which removes N-terminal dipeptides sequentially from polypeptides having unsubstituted N-termini provided that the penultimate residue is proline. The polypeptide is Probable dipeptidyl-aminopeptidase B (DAPB) (Grosmannia clavigera (strain kw1407 / UAMH 11150) (Blue stain fungus)).